Reading from the N-terminus, the 623-residue chain is Xaa-Pro aminopeptidase 1 (623 aa).

Position 77 (Arg77) interacts with a peptide. An N6-acetyllysine modification is found at Lys304. An a peptide-binding site is contributed by His395. 3 residues coordinate Mn(2+): Asp415, Asp426, and His489. A peptide contacts are provided by His489, His498, and Glu523. Residues Glu523 and Glu537 each coordinate Mn(2+).

Belongs to the peptidase M24B family. In terms of assembly, homodimer. Mn(2+) serves as cofactor. As to expression, expressed in all tissues tested, including pancreas, heart, muscle, kidney, liver, lung and brain. Highest levels in pancreas.

It localises to the cytoplasm. Its subcellular location is the cytosol. It catalyses the reaction Release of any N-terminal amino acid, including proline, that is linked to proline, even from a dipeptide or tripeptide.. Inhibited by apstatin and the metal ion chelators EDTA and 1,10-phenanthroline. Partially inhibited by dithiothreitol. Not inhibited by enalaprilat or amastatin. Specifically inhibited by the pseudodipeptide CQ31. Inhibition by CQ31 indirectly activates the CARD8 inflammasome: dipeptide accumulation following PEPD inactivation weaky inhibit dipeptidyl peptidases DDP8 and DPP9, relieving DPP8- and/or DPP9-mediated inhibition of CARD8. Functionally, metalloaminopeptidase that catalyzes the removal of a penultimate prolyl residue from the N-termini of peptides, such as Arg-Pro-Pro. Contributes to the degradation of bradykinin. The chain is Xaa-Pro aminopeptidase 1 from Homo sapiens (Human).